The following is a 401-amino-acid chain: Beta-lactamase (401 aa).

The N-terminal stretch at 1-39 (MKLFTSTLTAKKSSTHKPLISLALSVLISTLLISETAQA) is a signal peptide. The active-site Acyl-ester intermediate is the S102. Y188 functions as the Proton acceptor in the catalytic mechanism. Residue 353-355 (KTG) coordinates substrate.

Belongs to the class-C beta-lactamase family.

Its subcellular location is the secreted. The enzyme catalyses a beta-lactam + H2O = a substituted beta-amino acid. This protein is a serine beta-lactamase with a substrate specificity for cephalosporins. The chain is Beta-lactamase (ampC) from Psychrobacter immobilis.